Here is a 65-residue protein sequence, read N- to C-terminus: Sarcoplasmic/endoplasmic reticulum calcium ATPase regulator ARLN (65 aa).

Met-1 carries the post-translational modification N-acetylmethionine. Residues 1 to 38 are disordered; it reads MEVGQAASGTDGVRERRGSSAARRRSQDEPVQSGMNGI. Phosphoserine is present on residues Ser-19 and Ser-26. The helical transmembrane segment at 44 to 64 threads the bilayer; that stretch reads WLDLWLFILFDLALFIFVYLL.

As to quaternary structure, homooligomer. Can also form heterooligomers with other sarcoplasmic/endoplasmic reticulum calcium ATPase (SERCA) regulators ERLN, PLN, SLN and STRIT1/DWORF. Monomer. Interacts as a monomer with ATP2A2/SERCA2; the interaction results in inhibition of ATP2A2 Ca(2+) affinity.

Its subcellular location is the endoplasmic reticulum membrane. Its function is as follows. Inhibits the activity of the calcium ATPases ATP2A2/SERCA2 and ATP2A3/SERCA3 by decreasing their apparent affinity for Ca(2+). This chain is Sarcoplasmic/endoplasmic reticulum calcium ATPase regulator ARLN (Arln), found in Rattus norvegicus (Rat).